The following is a 235-amino-acid chain: Small capsomere-interacting protein (235 aa).

Positions 104–235 (PRIIRPQPPN…SGNASRSRRV (132 aa)) are disordered. Polar residues predominate over residues 127–139 (PQKTQSADQSALQ). The segment covering 158 to 188 (TTSASVGQQQHVVSGSSGQQPQQGAQSSTVQ) has biased composition (low complexity). Residues 220 to 235 (LSHTGQSGNASRSRRV) show a composition bias toward polar residues.

It belongs to the herpesviridae small capsomere-interacting protein family. In terms of assembly, interacts with the major capsid protein/MCP.

Its subcellular location is the virion. It localises to the host nucleus. In terms of biological role, participates in the assembly of the infectious particles by decorating the outer surface of the capsid shell and thus forming a layer between the capsid and the tegument. Complexes composed of the capsid protein VP5 and VP26 assemble together in the host cytoplasm and are translocated to the nucleus, where they accumulate and participate in capsid assembly. Participates in the assembly of the infectious particles by decorating the outer surface of the capsid shell and thus forming a layer between the capsid and the tegument. Complexes composed of the major capsid protein and small capsomere-interacting protein/SCP assemble together in the host cytoplasm and are translocated to the nucleus, where they accumulate and participate in capsid assembly. The protein is Small capsomere-interacting protein of Homo sapiens (Human).